Consider the following 221-residue polypeptide: ATP phosphoribosyltransferase (221 aa).

This sequence belongs to the ATP phosphoribosyltransferase family. Short subfamily. In terms of assembly, heteromultimer composed of HisG and HisZ subunits.

The protein localises to the cytoplasm. It catalyses the reaction 1-(5-phospho-beta-D-ribosyl)-ATP + diphosphate = 5-phospho-alpha-D-ribose 1-diphosphate + ATP. The protein operates within amino-acid biosynthesis; L-histidine biosynthesis; L-histidine from 5-phospho-alpha-D-ribose 1-diphosphate: step 1/9. Catalyzes the condensation of ATP and 5-phosphoribose 1-diphosphate to form N'-(5'-phosphoribosyl)-ATP (PR-ATP). Has a crucial role in the pathway because the rate of histidine biosynthesis seems to be controlled primarily by regulation of HisG enzymatic activity. The protein is ATP phosphoribosyltransferase of Anaeromyxobacter dehalogenans (strain 2CP-C).